The following is a 237-amino-acid chain: Sugar fermentation stimulation protein homolog (237 aa).

This sequence belongs to the SfsA family.

The protein is Sugar fermentation stimulation protein homolog of Azorhizobium caulinodans (strain ATCC 43989 / DSM 5975 / JCM 20966 / LMG 6465 / NBRC 14845 / NCIMB 13405 / ORS 571).